The primary structure comprises 91 residues: Small ribosomal subunit protein bS20 (91 aa).

The segment covering 1–18 (MPLHKSAEKRLRQSEKRN) has biased composition (basic and acidic residues). The disordered stretch occupies residues 1 to 24 (MPLHKSAEKRLRQSEKRNVRNRAR).

This sequence belongs to the bacterial ribosomal protein bS20 family.

Its function is as follows. Binds directly to 16S ribosomal RNA. This is Small ribosomal subunit protein bS20 from Chlorobium phaeobacteroides (strain DSM 266 / SMG 266 / 2430).